The chain runs to 179 residues: 3-hydroxyanthranilate 3,4-dioxygenase 2 (179 aa).

Arg-44 is a binding site for O2. Fe cation is bound by residues His-48, Glu-60, and His-99. Glu-60 provides a ligand contact to substrate. 2 residues coordinate substrate: Arg-103 and Glu-113.

It belongs to the 3-HAO family. It depends on Fe(2+) as a cofactor.

It localises to the cytoplasm. It carries out the reaction 3-hydroxyanthranilate + O2 = (2Z,4Z)-2-amino-3-carboxymuconate 6-semialdehyde. Its pathway is cofactor biosynthesis; NAD(+) biosynthesis; quinolinate from L-kynurenine: step 3/3. In terms of biological role, catalyzes the oxidative ring opening of 3-hydroxyanthranilate to 2-amino-3-carboxymuconate semialdehyde, which spontaneously cyclizes to quinolinate. The chain is 3-hydroxyanthranilate 3,4-dioxygenase 2 (bna1-2) from Aspergillus oryzae (strain ATCC 42149 / RIB 40) (Yellow koji mold).